A 28-amino-acid polypeptide reads, in one-letter code: Kappa-buthitoxin-Tt2b (28 aa).

Intrachain disulfides connect C2–C24, C7–C20, and C11–C26.

As to expression, expressed by the venom gland.

It is found in the secreted. In terms of biological role, blocks potassium channels Shaker-IR (with inactivation domain removed) and hKv1.2/KCNA2. The sequence is that of Kappa-buthitoxin-Tt2b from Tityus trivittatus (Argentinean scorpion).